A 279-amino-acid polypeptide reads, in one-letter code: Sulfur carrier protein FdhD (279 aa).

The active-site Cysteine persulfide intermediate is the C112.

The protein belongs to the FdhD family.

It is found in the cytoplasm. Its function is as follows. Required for formate dehydrogenase (FDH) activity. Acts as a sulfur carrier protein that transfers sulfur from IscS to the molybdenum cofactor prior to its insertion into FDH. In Nocardia farcinica (strain IFM 10152), this protein is Sulfur carrier protein FdhD.